A 158-amino-acid polypeptide reads, in one-letter code: Cyclic pyranopterin monophosphate synthase (158 aa).

Substrate is bound by residues 75-77 and 113-114; these read LCH and ME. Residue Asp-128 is part of the active site.

Belongs to the MoaC family. In terms of assembly, homohexamer; trimer of dimers.

The catalysed reaction is (8S)-3',8-cyclo-7,8-dihydroguanosine 5'-triphosphate = cyclic pyranopterin phosphate + diphosphate. It functions in the pathway cofactor biosynthesis; molybdopterin biosynthesis. Catalyzes the conversion of (8S)-3',8-cyclo-7,8-dihydroguanosine 5'-triphosphate to cyclic pyranopterin monophosphate (cPMP). This chain is Cyclic pyranopterin monophosphate synthase, found in Polynucleobacter asymbioticus (strain DSM 18221 / CIP 109841 / QLW-P1DMWA-1) (Polynucleobacter necessarius subsp. asymbioticus).